Consider the following 371-residue polypeptide: DNA replication and repair protein RecF (371 aa).

Residue 30-37 participates in ATP binding; that stretch reads GQNGMGKT.

It belongs to the RecF family.

The protein localises to the cytoplasm. Functionally, the RecF protein is involved in DNA metabolism; it is required for DNA replication and normal SOS inducibility. RecF binds preferentially to single-stranded, linear DNA. It also seems to bind ATP. The protein is DNA replication and repair protein RecF of Phocaeicola vulgatus (strain ATCC 8482 / DSM 1447 / JCM 5826 / CCUG 4940 / NBRC 14291 / NCTC 11154) (Bacteroides vulgatus).